A 295-amino-acid chain; its full sequence is MTHLFEGVGVALTTPFTNNKVNLEALKAHVNFLLENNAQAIIVNGTTAESPTLTTDEKELILKTVIDLVDKRVPVIAGTGTNDTEKSIQASIQAKALGADAIMLITPYYNKTNQRGLVKHFEAIADAVKLPVVLYNVPSRTNMTIEPETVEILSQHPYIVALKDATNDFEYLEEVKKRIDTNSFALYSGNDDNVVEYYQRGGQGVISVIANVIPKEFQALYDAQQSGLDIQDQFKPIGTLLSALSVDINPIPIKALTSYLGFGNYELRLPLVSLEDTDTKVLREAYDTFKAGENE.

T47 provides a ligand contact to pyruvate. Catalysis depends on Y135, which acts as the Proton donor/acceptor. The Schiff-base intermediate with substrate role is filled by K163. I206 lines the pyruvate pocket.

Homodimer. In fact, exists in a monomer-dimer equilibrium in solution, shifted in favor of the dimer in presence of the substrate pyruvate; the monomer has significantly reduced activity compared with the dimer.

Its subcellular location is the cytoplasm. The enzyme catalyses L-aspartate 4-semialdehyde + pyruvate = (2S,4S)-4-hydroxy-2,3,4,5-tetrahydrodipicolinate + H2O + H(+). It functions in the pathway amino-acid biosynthesis; L-lysine biosynthesis via DAP pathway; (S)-tetrahydrodipicolinate from L-aspartate: step 3/4. Is insensitive to lysine-feedback inhibition. Shows ASA substrate inhibition. Catalyzes the condensation of (S)-aspartate-beta-semialdehyde [(S)-ASA] and pyruvate to 4-hydroxy-tetrahydrodipicolinate (HTPA). This Staphylococcus aureus (strain MRSA252) protein is 4-hydroxy-tetrahydrodipicolinate synthase.